The primary structure comprises 431 residues: Glutamate-1-semialdehyde 2,1-aminomutase (431 aa).

The residue at position 266 (Lys-266) is an N6-(pyridoxal phosphate)lysine.

The protein belongs to the class-III pyridoxal-phosphate-dependent aminotransferase family. HemL subfamily. In terms of assembly, homodimer. It depends on pyridoxal 5'-phosphate as a cofactor.

Its subcellular location is the cytoplasm. It catalyses the reaction (S)-4-amino-5-oxopentanoate = 5-aminolevulinate. Its pathway is porphyrin-containing compound metabolism; protoporphyrin-IX biosynthesis; 5-aminolevulinate from L-glutamyl-tRNA(Glu): step 2/2. This chain is Glutamate-1-semialdehyde 2,1-aminomutase, found in Wolinella succinogenes (strain ATCC 29543 / DSM 1740 / CCUG 13145 / JCM 31913 / LMG 7466 / NCTC 11488 / FDC 602W) (Vibrio succinogenes).